The primary structure comprises 171 residues: Replication restart protein PriC (171 aa).

Belongs to the PriC family. Monomer. Component of the replication restart primosome, which is composed of PriA, PriB, PriC, DnaBe and DnaT; DnaG primase associates transiently with this complex. Interacts with the C-terminus of SSB. SSB interaction is required to load the main replicative helicase onto substrate replication forks. Interacts with helicase DnaB alone and in the DnaB-DnaC complex, probably 1:1 binding with DnaB.

Functionally, involved in the restart of stalled replication forks, which reloads the DnaB replicative helicase on sites other than the origin of replication. In vitro can load (E.coli) DnaB replicative helicase from a DnaB-DnaC complex on a single-stranded DNA (ssDNA)-binding protein (SSB)-coated stalled replication fork with no leading- or lagging-strand in the absence of other primosome proteins (PriA, PriB or DnaT). Binds SSB (tested with E.coli protein) and ssDNA. Complements priC in an E.coli priB-priC double deletion. In Cronobacter sakazakii (strain ATCC BAA-894) (Enterobacter sakazakii), this protein is Replication restart protein PriC.